A 949-amino-acid chain; its full sequence is Sensor histidine kinase RcsC (949 aa).

At 1–19 (MKYLASFRTTLKASRYMFR) the chain is on the cytoplasmic side. Residues 20–41 (ALALVLWLLIAFSSVFYIVNAL) form a helical membrane-spanning segment. The Periplasmic segment spans residues 42-313 (HQRESEIRQE…PVDKVLERIR (272 aa)). Residues 314-335 (MLILNAILLNVLAGAALFTLAR) form a helical membrane-spanning segment. The Cytoplasmic segment spans residues 336-949 (MYERRIFIPA…AERVRKSRDS (614 aa)). The PAS domain occupies 357–425 (QFNRKIVASA…VLTSNNTNLQ (69 aa)). The Histidine kinase domain occupies 476–692 (TVSHELRTPL…QFTVRIPLYG (217 aa)). Histidine 479 is subject to Phosphohistidine; by autocatalysis. The 101-residue stretch at 705 to 805 (SGKRCWLAVR…ARIYLIEMES (101 aa)) folds into the ABL domain. The region spanning 826 to 940 (MILVVDDHPI…VIKQTLTLYA (115 aa)) is the Response regulatory domain. Aspartate 875 carries the post-translational modification 4-aspartylphosphate.

Belongs to the RcsC family. Interacts with RcsD. Post-translationally, autophosphorylated. Activation probably requires a transfer of a phosphate group from a His in the transmitter domain to an Asp in the receiver domain.

Its subcellular location is the cell inner membrane. The catalysed reaction is ATP + protein L-histidine = ADP + protein N-phospho-L-histidine.. The Rcs phosphorelay may be activated by RcsF. DjlA, LolA and OmpG might act as a regulator of the phosphorelay. Activity is probably up-regulated by YmgA/AriR, and possibly down-regulated by YcgZ, all 3 are connector proteins providing additional signal input into signaling system. Component of the Rcs signaling system, which controls transcription of numerous genes. RcsC functions as a membrane-associated protein kinase that phosphorylates RcsD in response to environmental signals. The phosphoryl group is then transferred to the response regulator RcsB. RcsC also has phosphatase activity. The system controls expression of genes involved in colanic acid capsule synthesis, biofilm formation and cell division. The chain is Sensor histidine kinase RcsC from Escherichia coli (strain K12).